A 212-amino-acid polypeptide reads, in one-letter code: Ras-related protein Rab-15 (212 aa).

GTP-binding residues include Ser17, Gly18, Val19, Gly20, Lys21, Thr22, Cys23, Ser35, Ser39, and Thr40. Thr22 is a binding site for Mg(2+). 2 consecutive short sequence motifs (switch) follow at residues 31–45 and 63–80; these read NEFHSSHISTIGVDF and DTAGQERYQTITKQYYRR. Residues Thr40 and Asp63 each coordinate Mg(2+). Residues Gly66, Asn121, Lys122, Asp124, Ser151, and Ala152 each contribute to the GTP site. The tract at residues 192–212 is disordered; the sequence is ELEEDEGKPEGPANSSKTCWC. S-geranylgeranyl cysteine attachment occurs at residues Cys210 and Cys212. The residue at position 212 (Cys212) is a Cysteine methyl ester.

It belongs to the small GTPase superfamily. Rab family. As to quaternary structure, the GTP bound form of RAB15 interacts with REP15. Interacts (GTP-bound form) with MICAL1, MICAL3, MICALCL, EHBP1 and EHBP1L1. The cofactor is Mg(2+).

It is found in the cell membrane. It carries out the reaction GTP + H2O = GDP + phosphate + H(+). Regulated by guanine nucleotide exchange factors (GEFs) which promote the exchange of bound GDP for free GTP. Regulated by GTPase activating proteins (GAPs) which increase the GTP hydrolysis activity. Inhibited by GDP dissociation inhibitors (GDIs). Its function is as follows. The small GTPases Rab are key regulators of intracellular membrane trafficking, from the formation of transport vesicles to their fusion with membranes. Rabs cycle between an inactive GDP-bound form and an active GTP-bound form that is able to recruit to membranes different sets of downstream effectors directly responsible for vesicle formation, movement, tethering and fusion. RAB15 may act in concert with RAB3A in regulating aspects of synaptic vesicle membrane flow within the nerve terminal. In Bos taurus (Bovine), this protein is Ras-related protein Rab-15 (RAB15).